A 306-amino-acid polypeptide reads, in one-letter code: Dioxygenase FrzG (306 aa).

Residues His-132, Asp-134, and His-216 each coordinate Fe cation.

The protein belongs to the PhyH family. As to quaternary structure, homodimer. The cofactor is Fe cation.

It catalyses the reaction (1S,4S)-4-[(4-methoxyphenyl)methyl]-2-methyl-2,5-diazaspiro[bicyclo[3.2.1]octane-6,1'-cyclohexan]-4'-one + 2-oxoglutarate + O2 = (2S)-3-(4-methoxyphenyl)-2-[(3S)-3-(methylamino)-8-oxo-1-azaspiro[4.5]decan-1-yl]propanal + succinate + CO2. Its pathway is secondary metabolite biosynthesis. In terms of biological role, dioxygenase; part of the gene cluster that mediates the biosynthesis of the alkaloid (-)-FR901483, a potent immunosuppressant that shows efficacy in animal models and a probable inhibitor of purine nucleotide biosynthesis by targeting phosphoribosylpyrophosphate amidotransferase (PPAT). Within the pathway, FrzG cleaves the C9-N10' bond to yield a conjugated iminium. FrzG is also able to catalyze the dehydrogenation between C7 and C8 which leads to a shunt product. The biosynthesis of (-)-FR901483 starts with the condensation of two L-tyrosines to yield (S,S)-dityrosyl-piperazine. This process occurs in 3 steps with the non-canonical nonribosomal peptide synthetase FrzA catalyzing the reduction of L-tyrosine into L-tyrosinal, the spontaneous condensation of 2 L-tyrosinal units, and the subsequent reduction by the NmrA-like family domain-containing oxidoreductase FrzB. The cytochrome P450 monooxygenase FrzC then performs coupling between N10 and C1' to morph the piperazine into a 1,4-diazabicyclo[3.2.1]octane spiro-fused to a 2,5-cyclohexadienone. The dienone portion is further reduced to cyclohexanone by the flavin-dependent reductase FrzD. The methyltranserases (MTs) FrzE and FrzF are then involved in the methylation at the C10' amine and the C4 phenolic oxygen, respectively. The order of the two MTs appear to be interchangeable. Cleavage of the C9-N10' bond by the dioxygenase FrzG then leads to formation of a conjugated iminium. In addition to the oxidation of C9, an additional dehydrogenation between C7 and C8 can occur to give a likely shunt product. The next biosynthetic step is the intramolecular aldol condensation catalyzed by the newly identified aldolase FrzH to yield an aza-tricyclic product with the formation of a C9-C3' bond. The short-chain dehydrogenase/reductase FrzI then produces dephospho-(-)-FR901483 that is phosphorylated at C4'-OH into (-)-FR901483 by the phosphotransferase FrzJ. The polypeptide is Dioxygenase FrzG (Cladobotryum sp).